The chain runs to 155 residues: MSFRLWGRCIFFFCFLLEAIDSRGGRRGGKGKGKSNLQFAQVAEFSLVQTVLSDNRSAQIITGSHFSQTYRLGYKLLIICKARGDPRPTIKWYKEGAEIQPKASIHYYEKPIENDTIWSKLEVDPATMGDQGVYACVANNPHGVMAKNFKAEYTY.

The signal sequence occupies residues 1 to 22 (MSFRLWGRCIFFFCFLLEAIDS). N-linked (GlcNAc...) asparagine glycans are attached at residues asparagine 55 and asparagine 114. The Ig-like C2-type domain maps to 73–154 (GYKLLIICKA…MAKNFKAEYT (82 aa)). Cysteine 80 and cysteine 136 are joined by a disulfide.

Interacts with the non-alpha subunit of nicotinic acetylcholine receptor unc-29 and lev-10 to stabilize the complex formed between unc-29 and lev-10. In terms of tissue distribution, expressed in body wall muscle cells, the pharyngeal muscle cell pm6 and in four head neurons.

It localises to the synapse. The protein localises to the secreted. Its function is as follows. Required for the localization of acetylcholine receptors at neuromuscular junctions and for subsequently controlling the response evoked by receptor stimulation. The sequence is that of Immunoglobulin domain-containing protein oig-4 from Caenorhabditis elegans.